A 452-amino-acid polypeptide reads, in one-letter code: CUGBP Elav-like family member 3 (452 aa).

RRM domains follow at residues 7–88 (IKLF…PADS), 94–174 (RKLF…FADT), and 367–445 (CNIF…LKRP).

Belongs to the CELF/BRUNOL family.

It is found in the nucleus. The protein localises to the cytoplasm. Functionally, RNA-binding protein that may be involved in the regulation of pre-mRNA alternative splicing. The protein is CUGBP Elav-like family member 3 (celf3) of Danio rerio (Zebrafish).